The primary structure comprises 502 residues: MTALPAHLERVHMVGIGGAGMSGIARILLSRGGLVSGSDAKESRGVLALRARGAQVRIGHDADALDLLPGGPTVVVTTHAAIPKDNPELVEAARRGIPVILRPAVLASLMQGNRTFLVSGTHGKTSTTSMLVVALQHCGFDPSFAVGGELNEAGTNAHHGSGDVFVAEADESDGSLLQYDPNVIVVTNIEADHLDYFGSVEAYVKVFDDFVDKLRPGGLLIACLDDPGSADLAKRIVASGRSDIRVLGYGSADAQEVEAGTAFEPVDGVEVGVRLLGFHAHDVGGVLQFQLAGENAARTVRMAVPGRHMALNALAALLAARDAGAETEEIVEGLAGFGGVHRRFQFTGRERGVRVFDDYAHHPTEVRAVLGAAADLVRPEDDSSSTNSAAGRVIVVFQPHLYSRTAAFAVEFAQALDLADEVVVLDVYGAREEPMPGVSGALVAQSVTKPVHYQPDLSQAPKQVAALAHPGDIVITMGAGDVTMLGKQILDALRSAPHPAPR.

120 to 126 (GTHGKTS) serves as a coordination point for ATP.

It belongs to the MurCDEF family.

It localises to the cytoplasm. It carries out the reaction UDP-N-acetyl-alpha-D-muramate + L-alanine + ATP = UDP-N-acetyl-alpha-D-muramoyl-L-alanine + ADP + phosphate + H(+). It functions in the pathway cell wall biogenesis; peptidoglycan biosynthesis. Its function is as follows. Cell wall formation. The chain is UDP-N-acetylmuramate--L-alanine ligase from Rhodococcus erythropolis (strain PR4 / NBRC 100887).